Reading from the N-terminus, the 98-residue chain is UPF0235 protein Ping_3043 (98 aa).

The protein belongs to the UPF0235 family.

In Psychromonas ingrahamii (strain DSM 17664 / CCUG 51855 / 37), this protein is UPF0235 protein Ping_3043.